The chain runs to 514 residues: Type-2 serine--tRNA ligase (514 aa).

Residue Ala313 coordinates L-serine. Residue Cys315 participates in Zn(2+) binding. An L-serine-binding site is contributed by Arg344. ATP is bound by residues 344-346 and 355-356; these read RWE and RV. 361–363 is a binding site for L-serine; the sequence is RGE. 2 residues coordinate Zn(2+): Glu363 and Cys470. Arg477 provides a ligand contact to ATP.

Belongs to the class-II aminoacyl-tRNA synthetase family. Type-2 seryl-tRNA synthetase subfamily. Homodimer. It depends on Zn(2+) as a cofactor.

The protein resides in the cytoplasm. It catalyses the reaction tRNA(Ser) + L-serine + ATP = L-seryl-tRNA(Ser) + AMP + diphosphate + H(+). It carries out the reaction tRNA(Sec) + L-serine + ATP = L-seryl-tRNA(Sec) + AMP + diphosphate + H(+). It participates in aminoacyl-tRNA biosynthesis; selenocysteinyl-tRNA(Sec) biosynthesis; L-seryl-tRNA(Sec) from L-serine and tRNA(Sec): step 1/1. In terms of biological role, catalyzes the attachment of serine to tRNA(Ser). Is also able to aminoacylate tRNA(Sec) with serine, to form the misacylated tRNA L-seryl-tRNA(Sec), which will be further converted into selenocysteinyl-tRNA(Sec). This Methanococcus maripaludis (strain C6 / ATCC BAA-1332) protein is Type-2 serine--tRNA ligase.